Here is a 310-residue protein sequence, read N- to C-terminus: Beta-ketoacyl-[acyl-carrier-protein] synthase III 1 (310 aa).

Active-site residues include cysteine 112 and histidine 235. Positions 236–240 are ACP-binding; sequence QANIR. Asparagine 265 is an active-site residue.

The protein belongs to the thiolase-like superfamily. FabH family. Homodimer.

The protein resides in the cytoplasm. It catalyses the reaction malonyl-[ACP] + acetyl-CoA + H(+) = 3-oxobutanoyl-[ACP] + CO2 + CoA. It participates in lipid metabolism; fatty acid biosynthesis. Catalyzes the condensation reaction of fatty acid synthesis by the addition to an acyl acceptor of two carbons from malonyl-ACP. Catalyzes the first condensation reaction which initiates fatty acid synthesis and may therefore play a role in governing the total rate of fatty acid production. Possesses both acetoacetyl-ACP synthase and acetyl transacylase activities. Its substrate specificity determines the biosynthesis of branched-chain and/or straight-chain of fatty acids. The polypeptide is Beta-ketoacyl-[acyl-carrier-protein] synthase III 1 (Bacillus anthracis).